The following is a 413-amino-acid chain: Multifunctional CCA protein (413 aa).

The ATP site is built by glycine 8 and arginine 11. The CTP site is built by glycine 8 and arginine 11. Mg(2+) is bound by residues aspartate 21 and aspartate 23. ATP is bound by residues arginine 91, arginine 137, and arginine 140. CTP is bound by residues arginine 91, arginine 137, and arginine 140. The HD domain maps to 228-329 (TGIHTLMVLA…LKVFDKADAW (102 aa)).

The protein belongs to the tRNA nucleotidyltransferase/poly(A) polymerase family. Bacterial CCA-adding enzyme type 1 subfamily. Monomer. Can also form homodimers and oligomers. Mg(2+) is required as a cofactor. The cofactor is Ni(2+).

It carries out the reaction a tRNA precursor + 2 CTP + ATP = a tRNA with a 3' CCA end + 3 diphosphate. It catalyses the reaction a tRNA with a 3' CCA end + 2 CTP + ATP = a tRNA with a 3' CCACCA end + 3 diphosphate. Catalyzes the addition and repair of the essential 3'-terminal CCA sequence in tRNAs without using a nucleic acid template. Adds these three nucleotides in the order of C, C, and A to the tRNA nucleotide-73, using CTP and ATP as substrates and producing inorganic pyrophosphate. tRNA 3'-terminal CCA addition is required both for tRNA processing and repair. Also involved in tRNA surveillance by mediating tandem CCA addition to generate a CCACCA at the 3' terminus of unstable tRNAs. While stable tRNAs receive only 3'-terminal CCA, unstable tRNAs are marked with CCACCA and rapidly degraded. The sequence is that of Multifunctional CCA protein from Aeromonas salmonicida (strain A449).